Reading from the N-terminus, the 401-residue chain is Lipid-A-disaccharide synthase (401 aa).

Belongs to the LpxB family.

It catalyses the reaction a lipid X + a UDP-2-N,3-O-bis[(3R)-3-hydroxyacyl]-alpha-D-glucosamine = a lipid A disaccharide + UDP + H(+). Its pathway is bacterial outer membrane biogenesis; LPS lipid A biosynthesis. Its function is as follows. Condensation of UDP-2,3-diacylglucosamine and 2,3-diacylglucosamine-1-phosphate to form lipid A disaccharide, a precursor of lipid A, a phosphorylated glycolipid that anchors the lipopolysaccharide to the outer membrane of the cell. This Rhodospirillum centenum (strain ATCC 51521 / SW) protein is Lipid-A-disaccharide synthase.